The sequence spans 236 residues: Small ribosomal subunit protein uS3 (236 aa).

The region spanning I39–K107 is the KH type-2 domain. The segment covering Q213–G229 has biased composition (basic and acidic residues). A disordered region spans residues Q213–Q236.

The protein belongs to the universal ribosomal protein uS3 family. Part of the 30S ribosomal subunit. Forms a tight complex with proteins S10 and S14.

Binds the lower part of the 30S subunit head. Binds mRNA in the 70S ribosome, positioning it for translation. The chain is Small ribosomal subunit protein uS3 from Wolinella succinogenes (strain ATCC 29543 / DSM 1740 / CCUG 13145 / JCM 31913 / LMG 7466 / NCTC 11488 / FDC 602W) (Vibrio succinogenes).